The following is a 202-amino-acid chain: Superoxide dismutase [Mn] (202 aa).

The Mn(2+) site is built by H27, H82, D164, and H168.

The protein belongs to the iron/manganese superoxide dismutase family. In terms of assembly, homodimer. The cofactor is Mn(2+).

The enzyme catalyses 2 superoxide + 2 H(+) = H2O2 + O2. Its function is as follows. Destroys superoxide anion radicals which are normally produced within the cells and which are toxic to biological systems. The chain is Superoxide dismutase [Mn] (sodA) from Listeria ivanovii.